The following is a 479-amino-acid chain: Zinc metalloproteinase/disintegrin PMMP-1 (479 aa).

An N-terminal signal peptide occupies residues 1 to 20 (MIQVLLVTICLAVFPYQGSS). The propeptide occupies 21-188 (IILESGNVND…PIKKASKLVV (168 aa)). A Peptidase M12B domain is found at 194 to 390 (RYVELVIVAD…HNPQCILNKP (197 aa)). Disulfide bonds link cysteine 305–cysteine 385, cysteine 345–cysteine 369, and cysteine 347–cysteine 352. Histidine 330 is a binding site for Zn(2+). The active site involves glutamate 331. Zn(2+) contacts are provided by histidine 334 and histidine 339. Asparagine 368 is a glycosylation site (N-linked (GlcNAc...) asparagine). A propeptide spanning residues 391–408 (LRTDTVSTPVSGNELLEA) is cleaved from the precursor. Residues 398 to 479 (TPVSGNELLE…ADCPRNGLYG (82 aa)) form the Disintegrin domain. 6 cysteine pairs are disulfide-bonded: cysteine 412–cysteine 427, cysteine 414–cysteine 422, cysteine 421–cysteine 444, cysteine 435–cysteine 441, cysteine 440–cysteine 465, and cysteine 453–cysteine 472. Residues 457-459 (RGD) carry the Cell attachment site motif.

It belongs to the venom metalloproteinase (M12B) family. P-II subfamily. P-IIa sub-subfamily. In terms of assembly, monomer. Zn(2+) is required as a cofactor. As to expression, expressed by the venom gland.

It localises to the secreted. Impairs hemostasis in the envenomed animal. In terms of biological role, inhibits platelet aggregation. The sequence is that of Zinc metalloproteinase/disintegrin PMMP-1 from Protobothrops mucrosquamatus (Taiwan habu).